Consider the following 208-residue polypeptide: MKVVEVKHPLVRHKIGLMREGDVSTKRFRELAAEVGSLLTYEATADFETEKVTIEGWNGPVEVEQIKGKKVTVVPILRAGLGMMDGVLEHVPSARISVVGMYRDEETLEPVPYFEKLASNMPERMALVVDPMLATGGSMISTIDLLKDRGCTSIKALVLVAAPEGVAALEKAHPDVELYTASIDDCLNEQGYILPGLGDAGDKIFGTK.

5-phospho-alpha-D-ribose 1-diphosphate-binding positions include arginine 78, arginine 103, and 130–138; that span reads DPMLATGGS. Residues isoleucine 193 and 198-200 contribute to the uracil site; that span reads GDA. Residue aspartate 199 participates in 5-phospho-alpha-D-ribose 1-diphosphate binding.

The protein belongs to the UPRTase family. Requires Mg(2+) as cofactor.

It catalyses the reaction UMP + diphosphate = 5-phospho-alpha-D-ribose 1-diphosphate + uracil. It functions in the pathway pyrimidine metabolism; UMP biosynthesis via salvage pathway; UMP from uracil: step 1/1. With respect to regulation, allosterically activated by GTP. Its function is as follows. Catalyzes the conversion of uracil and 5-phospho-alpha-D-ribose 1-diphosphate (PRPP) to UMP and diphosphate. This is Uracil phosphoribosyltransferase from Shewanella piezotolerans (strain WP3 / JCM 13877).